The primary structure comprises 330 residues: Peroxidase 70 (330 aa).

The N-terminal stretch at 1–24 is a signal peptide; it reads MRSFTNLNPCYVLLPFFLVLATNA. Cystine bridges form between Cys43-Cys119, Cys76-Cys81, Cys125-Cys326, and Cys202-Cys234. His74 serves as the catalytic Proton acceptor. Ca(2+)-binding residues include Asp75, Val78, Gly80, Asp82, and Ser84. Pro165 contributes to the substrate binding site. His195 contributes to the heme b binding site. Thr196 is a binding site for Ca(2+). The Ca(2+) site is built by Asp247, Ser250, and Asp255.

It belongs to the peroxidase family. Classical plant (class III) peroxidase subfamily. It depends on heme b as a cofactor. The cofactor is Ca(2+).

Its subcellular location is the secreted. The catalysed reaction is 2 a phenolic donor + H2O2 = 2 a phenolic radical donor + 2 H2O. In terms of biological role, removal of H(2)O(2), oxidation of toxic reductants, biosynthesis and degradation of lignin, suberization, auxin catabolism, response to environmental stresses such as wounding, pathogen attack and oxidative stress. These functions might be dependent on each isozyme/isoform in each plant tissue. This chain is Peroxidase 70 (PER70), found in Arabidopsis thaliana (Mouse-ear cress).